The chain runs to 162 residues: Putative 4-hydroxy-4-methyl-2-oxoglutarate aldolase (162 aa).

Substrate is bound by residues 75–78 (GDML) and Arg97. Asp98 contributes to the a divalent metal cation binding site.

The protein belongs to the class II aldolase/RraA-like family. As to quaternary structure, homotrimer. Requires a divalent metal cation as cofactor.

The catalysed reaction is 4-hydroxy-4-methyl-2-oxoglutarate = 2 pyruvate. It catalyses the reaction oxaloacetate + H(+) = pyruvate + CO2. In terms of biological role, catalyzes the aldol cleavage of 4-hydroxy-4-methyl-2-oxoglutarate (HMG) into 2 molecules of pyruvate. Also contains a secondary oxaloacetate (OAA) decarboxylase activity due to the common pyruvate enolate transition state formed following C-C bond cleavage in the retro-aldol and decarboxylation reactions. The protein is Putative 4-hydroxy-4-methyl-2-oxoglutarate aldolase of Pseudomonas syringae pv. tomato (strain ATCC BAA-871 / DC3000).